We begin with the raw amino-acid sequence, 167 residues long: Large ribosomal subunit protein uL10 (167 aa).

This sequence belongs to the universal ribosomal protein uL10 family. In terms of assembly, part of the ribosomal stalk of the 50S ribosomal subunit. The N-terminus interacts with L11 and the large rRNA to form the base of the stalk. The C-terminus forms an elongated spine to which L12 dimers bind in a sequential fashion forming a multimeric L10(L12)X complex.

Functionally, forms part of the ribosomal stalk, playing a central role in the interaction of the ribosome with GTP-bound translation factors. This chain is Large ribosomal subunit protein uL10, found in Streptococcus mutans serotype c (strain ATCC 700610 / UA159).